Reading from the N-terminus, the 470-residue chain is Na(+)-translocating NADH-quinone reductase subunit A (470 aa).

Belongs to the NqrA family. In terms of assembly, composed of six subunits; NqrA, NqrB, NqrC, NqrD, NqrE and NqrF.

The enzyme catalyses a ubiquinone + n Na(+)(in) + NADH + H(+) = a ubiquinol + n Na(+)(out) + NAD(+). In terms of biological role, NQR complex catalyzes the reduction of ubiquinone-1 to ubiquinol by two successive reactions, coupled with the transport of Na(+) ions from the cytoplasm to the periplasm. NqrA to NqrE are probably involved in the second step, the conversion of ubisemiquinone to ubiquinol. This Chlamydia caviae (strain ATCC VR-813 / DSM 19441 / 03DC25 / GPIC) (Chlamydophila caviae) protein is Na(+)-translocating NADH-quinone reductase subunit A.